We begin with the raw amino-acid sequence, 208 residues long: Uracil phosphoribosyltransferase (208 aa).

5-phospho-alpha-D-ribose 1-diphosphate-binding positions include Arg-78, Arg-103, and 130–138 (DPMLATGGS). Uracil contacts are provided by residues Ile-193 and 198–200 (GDA). Asp-199 serves as a coordination point for 5-phospho-alpha-D-ribose 1-diphosphate.

The protein belongs to the UPRTase family. Requires Mg(2+) as cofactor.

The catalysed reaction is UMP + diphosphate = 5-phospho-alpha-D-ribose 1-diphosphate + uracil. It participates in pyrimidine metabolism; UMP biosynthesis via salvage pathway; UMP from uracil: step 1/1. Its activity is regulated as follows. Allosterically activated by GTP. In terms of biological role, catalyzes the conversion of uracil and 5-phospho-alpha-D-ribose 1-diphosphate (PRPP) to UMP and diphosphate. This chain is Uracil phosphoribosyltransferase, found in Roseiflexus sp. (strain RS-1).